Here is a 320-residue protein sequence, read N- to C-terminus: TPR repeat-containing protein MJ0263 (320 aa).

TPR repeat units lie at residues 12 to 45 (ILKDVVNALECADKGNFDKALEYLEKAQKVDKDN), 46 to 79 (PLVLYVKGIVLKLKGDMEKAEKYFECLENIEGTS), 80 to 113 (LLSLGNLICLTFVKGEYERTLKYIEKLSRLSKPC), 114 to 147 (YLSPFHKALIYIEFGEFEKALEALDEFLKIYPNL), 148 to 181 (TSILRQKASILEILGKLDEALDCVNKILSIKKDD), 182 to 215 (AHAWYLKGRILKKLGNIKEALDALKMAINLNENL), 216 to 249 (VHVYKDIAYLELANNNYEEALNYITKYLEKFPND), 250 to 283 (VEAKFYLALIYENLNKVDDALKIYDKIISNKNVK), and 289 to 320 (KSSILNKARILEKLGKIEEAVETYNKAFDNNI).

The chain is TPR repeat-containing protein MJ0263 from Methanocaldococcus jannaschii (strain ATCC 43067 / DSM 2661 / JAL-1 / JCM 10045 / NBRC 100440) (Methanococcus jannaschii).